The sequence spans 161 residues: Xanthine-guanine phosphoribosyltransferase (161 aa).

5-phospho-alpha-D-ribose 1-diphosphate-binding positions include R41–G42 and D95–T103. D96 is a Mg(2+) binding site. Residues D99 and I142 each contribute to the guanine site. The xanthine site is built by D99 and I142. Residues D99–T103 and W141–I142 contribute to the GMP site.

It belongs to the purine/pyrimidine phosphoribosyltransferase family. XGPT subfamily. Homotetramer. Requires Mg(2+) as cofactor.

The protein resides in the cell inner membrane. It catalyses the reaction GMP + diphosphate = guanine + 5-phospho-alpha-D-ribose 1-diphosphate. The enzyme catalyses XMP + diphosphate = xanthine + 5-phospho-alpha-D-ribose 1-diphosphate. The catalysed reaction is IMP + diphosphate = hypoxanthine + 5-phospho-alpha-D-ribose 1-diphosphate. It participates in purine metabolism; GMP biosynthesis via salvage pathway; GMP from guanine: step 1/1. Its pathway is purine metabolism; XMP biosynthesis via salvage pathway; XMP from xanthine: step 1/1. In terms of biological role, purine salvage pathway enzyme that catalyzes the transfer of the ribosyl-5-phosphate group from 5-phospho-alpha-D-ribose 1-diphosphate (PRPP) to the N9 position of the 6-oxopurines guanine and xanthine to form the corresponding ribonucleotides GMP (guanosine 5'-monophosphate) and XMP (xanthosine 5'-monophosphate), with the release of PPi. To a lesser extent, also acts on hypoxanthine. The protein is Xanthine-guanine phosphoribosyltransferase of Idiomarina loihiensis (strain ATCC BAA-735 / DSM 15497 / L2-TR).